The following is an 83-amino-acid chain: Mu-theraphotoxin-Hhn2c (83 aa).

An N-terminal signal peptide occupies residues 1–21; sequence MKASMFLALAGLVLLFVVGYA. Positions 22–48 are excised as a propeptide; it reads SESEEKEFPIELLSKIFAVDVFKGEER. Cystine bridges form between C50–C65, C57–C70, and C64–C77. At L81 the chain carries Leucine amide.

The protein belongs to the neurotoxin 10 (Hwtx-1) family. 15 (Hntx-3) subfamily. In terms of assembly, monomer. Expressed by the venom gland.

It localises to the secreted. In terms of biological role, lethal neurotoxin. Selectively blocks tetrodotoxin-sensitive voltage-gated sodium channels (Nav). Does not affect tetrodotoxin-resistant voltage-gated sodium channels or calcium channels. The protein is Mu-theraphotoxin-Hhn2c of Cyriopagopus hainanus (Chinese bird spider).